A 193-amino-acid polypeptide reads, in one-letter code: Pre-histone-like nucleoprotein (193 aa).

Ser2 is subject to N-acetylserine; by host. Residues 2–24 (SIFISPSNNTGWGLRAPSKMYGG) constitute a propeptide that is removed on maturation. An N6-acetyllysine; by host modification is found at Lys48. Thr55 is modified (phosphothreonine; by host). The Nuclear localization signal signature appears at 183–193 (RVPVRTRPPRT).

Belongs to the adenoviridae histone-like nucleoprotein family. As to quaternary structure, interacts with the core-capsid bridging protein; this interaction bridges the virus core to the capsid. Interacts with host NPM1; this interaction might play a role in placing the pre-histone-like nucleoprotein on the viral DNA or regulating viral gene expression. Interacts with host HMGB1; this interaction inhibits host immune response. In terms of processing, cleaved near the N-terminus by the viral protease during virion maturation to form the mature protein.

Its subcellular location is the virion. It is found in the host nucleus. The protein localises to the host nucleolus. In terms of biological role, plays a role in the inhibition of host immune response within the nucleus. Interacts with cellular nucleosomes and immobilizes the host immune danger signal HMGB1 on chromatin. In turn, prevents HMGB1 release out of the cell and thus decreases inflammation. Also plays a role in the wrapping and condensation of the viral DNA. May also promote viral genome import into the nucleus. This Homo sapiens (Human) protein is Pre-histone-like nucleoprotein.